The following is a 410-amino-acid chain: Histidine--tRNA ligase (410 aa).

The protein belongs to the class-II aminoacyl-tRNA synthetase family. Homodimer.

The protein resides in the cytoplasm. It carries out the reaction tRNA(His) + L-histidine + ATP = L-histidyl-tRNA(His) + AMP + diphosphate + H(+). The polypeptide is Histidine--tRNA ligase (Campylobacter hominis (strain ATCC BAA-381 / DSM 21671 / CCUG 45161 / LMG 19568 / NCTC 13146 / CH001A)).